A 491-amino-acid polypeptide reads, in one-letter code: Aspartyl/glutamyl-tRNA(Asn/Gln) amidotransferase subunit B (491 aa).

The protein belongs to the GatB/GatE family. GatB subfamily. As to quaternary structure, heterotrimer of A, B and C subunits.

The catalysed reaction is L-glutamyl-tRNA(Gln) + L-glutamine + ATP + H2O = L-glutaminyl-tRNA(Gln) + L-glutamate + ADP + phosphate + H(+). It carries out the reaction L-aspartyl-tRNA(Asn) + L-glutamine + ATP + H2O = L-asparaginyl-tRNA(Asn) + L-glutamate + ADP + phosphate + 2 H(+). Its function is as follows. Allows the formation of correctly charged Asn-tRNA(Asn) or Gln-tRNA(Gln) through the transamidation of misacylated Asp-tRNA(Asn) or Glu-tRNA(Gln) in organisms which lack either or both of asparaginyl-tRNA or glutaminyl-tRNA synthetases. The reaction takes place in the presence of glutamine and ATP through an activated phospho-Asp-tRNA(Asn) or phospho-Glu-tRNA(Gln). The chain is Aspartyl/glutamyl-tRNA(Asn/Gln) amidotransferase subunit B from Burkholderia lata (strain ATCC 17760 / DSM 23089 / LMG 22485 / NCIMB 9086 / R18194 / 383).